A 754-amino-acid polypeptide reads, in one-letter code: 5-methyltetrahydropteroyltriglutamate--homocysteine methyltransferase (754 aa).

5-methyltetrahydropteroyltri-L-glutamate contacts are provided by residues 17–20 and Lys117; that span reads RELK. L-homocysteine-binding positions include 431 to 433 and Glu484; that span reads IGS. L-methionine contacts are provided by residues 431-433 and Glu484; that span reads IGS. 5-methyltetrahydropteroyltri-L-glutamate contacts are provided by residues 515 to 516 and Trp561; that span reads RC. Residue Asp599 coordinates L-homocysteine. Residue Asp599 coordinates L-methionine. Glu605 contacts 5-methyltetrahydropteroyltri-L-glutamate. Residues His641, Cys643, and Glu665 each contribute to the Zn(2+) site. His694 functions as the Proton donor in the catalytic mechanism. Cys726 is a binding site for Zn(2+).

The protein belongs to the vitamin-B12 independent methionine synthase family. The cofactor is Zn(2+).

The enzyme catalyses 5-methyltetrahydropteroyltri-L-glutamate + L-homocysteine = tetrahydropteroyltri-L-glutamate + L-methionine. The protein operates within amino-acid biosynthesis; L-methionine biosynthesis via de novo pathway; L-methionine from L-homocysteine (MetE route): step 1/1. Its function is as follows. Catalyzes the transfer of a methyl group from 5-methyltetrahydrofolate to homocysteine resulting in methionine formation. This is 5-methyltetrahydropteroyltriglutamate--homocysteine methyltransferase from Salmonella newport (strain SL254).